The following is a 118-amino-acid chain: uncharacterized protein (118 aa).

A helical transmembrane segment spans residues 95-115; it reads IIINLVIILAMYAPEIIGKLL.

It belongs to the M.jannaschii MJ0023/MJ0349/MJ1072/MJ1074/MJ1107/MJECL16 family.

Its subcellular location is the membrane. This is an uncharacterized protein from Methanocaldococcus jannaschii (strain ATCC 43067 / DSM 2661 / JAL-1 / JCM 10045 / NBRC 100440) (Methanococcus jannaschii).